A 798-amino-acid polypeptide reads, in one-letter code: Glycogen phosphorylase (798 aa).

Residue Lys646 is modified to N6-(pyridoxal phosphate)lysine.

The protein belongs to the glycogen phosphorylase family. Pyridoxal 5'-phosphate is required as a cofactor.

The enzyme catalyses [(1-&gt;4)-alpha-D-glucosyl](n) + phosphate = [(1-&gt;4)-alpha-D-glucosyl](n-1) + alpha-D-glucose 1-phosphate. Phosphorylase is an important allosteric enzyme in carbohydrate metabolism. Enzymes from different sources differ in their regulatory mechanisms and in their natural substrates. However, all known phosphorylases share catalytic and structural properties. In Bacillus subtilis (strain 168), this protein is Glycogen phosphorylase (glgP).